The chain runs to 776 residues: Serine/threonine-protein kinase-like protein CCR2 (776 aa).

Positions M1–A22 are cleaved as a signal peptide. Residues Y23–L432 lie on the Extracellular side of the membrane. N-linked (GlcNAc...) asparagine glycosylation is found at N59, N92, N154, N162, N205, N278, N287, and N350. A TNFR-Cys repeat occupies N341 to C396. Intrachain disulfides connect C342–C371, C374–C388, and C378–C396. N404 is a glycosylation site (N-linked (GlcNAc...) asparagine). A helical transmembrane segment spans residues V433–I453. Over P454–F776 the chain is Cytoplasmic. The region spanning F519–F776 is the Protein kinase domain. ATP is bound by residues L525–V533 and K547. Residue D644 is the Proton acceptor of the active site.

Belongs to the protein kinase superfamily. Ser/Thr protein kinase family. As to quaternary structure, homodimer. Expressed in roots, leaves, shoot apical meristems (SAM), and floral buds.

The protein resides in the membrane. It catalyses the reaction L-seryl-[protein] + ATP = O-phospho-L-seryl-[protein] + ADP + H(+). The enzyme catalyses L-threonyl-[protein] + ATP = O-phospho-L-threonyl-[protein] + ADP + H(+). In terms of biological role, serine/threonine-protein kinase with low activity. This is Serine/threonine-protein kinase-like protein CCR2 (CCR2) from Arabidopsis thaliana (Mouse-ear cress).